A 93-amino-acid polypeptide reads, in one-letter code: Ribonuclease P protein component 1 (93 aa).

Belongs to the eukaryotic/archaeal RNase P protein component 1 family. As to quaternary structure, consists of a catalytic RNA component and at least 4-5 protein subunits.

Its subcellular location is the cytoplasm. It carries out the reaction Endonucleolytic cleavage of RNA, removing 5'-extranucleotides from tRNA precursor.. In terms of biological role, part of ribonuclease P, a protein complex that generates mature tRNA molecules by cleaving their 5'-ends. The polypeptide is Ribonuclease P protein component 1 (Methanothermobacter thermautotrophicus (strain ATCC 29096 / DSM 1053 / JCM 10044 / NBRC 100330 / Delta H) (Methanobacterium thermoautotrophicum)).